The sequence spans 274 residues: Remorin 4.2 (274 aa).

Residues 1–30 (MLTLYHQERSPDATSNDRDETPETVVREVH) show a composition bias toward basic and acidic residues. Disordered stretches follow at residues 1–71 (MLTL…EGEN), 117–157 (TDHE…TVQR), and 218–245 (AMEK…AKRG). 2 stretches are compositionally biased toward polar residues: residues 61-71 (RSATTMSEGEN) and 145-156 (GPGQSRVGSTVQ). The stretch at 204 to 239 (MKKIERKLEERKAKAMEKTQNNVAKAQRKAEERRAT) forms a coiled coil. The span at 231 to 245 (RKAEERRATAEAKRG) shows a compositional bias: basic and acidic residues.

This sequence belongs to the remorin family. In terms of assembly, forms homodimer and heterodimer with REM4.1. Interacts with KIN11. In terms of processing, probably ubiquitinated and degraded by the 26S proteasome pathway. In terms of tissue distribution, predominantly detected in bud, stem, root, flower, silique, and leaves, and enhanced dramatically in senescence leaf.

The protein localises to the cell membrane. Its function is as follows. Collaborates with REM4.1 to positively regulate the BCTV and BSCTV susceptibility. The sequence is that of Remorin 4.2 from Arabidopsis thaliana (Mouse-ear cress).